The following is a 310-amino-acid chain: MTVTVKKLIERLKLEIIYANDQLLEKEITTSDISRPGLEMTGYFDYYSPERIQLFGMKEWSYMTKMTAHNRYSVLREMFKKDTPAVIVSRDLPIPEEMVKAAEEEGIALLRSKISTSRLSGSISYYLDALLAERTSVHGVLMDIYGMGVLIQGDSGIGKSETGLELVKRGHRLVADDRVDVYAKDEETLWGEPAEILRHLLEIRGVGIIDVMSLYGASAVKDSSQVQLAIYLENFEAGKVFDRLGNGHEEVEFAGVKVPRIRIPVKTGRNVSVVIEAAAMNHRAKQMGFDATKTFEERLTNLISRNEEMK.

Residues histidine 138 and lysine 159 contribute to the active site. Residue 153–160 coordinates ATP; the sequence is GDSGIGKS. Residue serine 160 coordinates Mg(2+). Aspartate 177 functions as the Proton acceptor; for phosphorylation activity. Proton donor; for dephosphorylation activity in the catalytic mechanism. The segment at 201–210 is important for the catalytic mechanism of both phosphorylation and dephosphorylation; sequence LEIRGVGIID. Glutamate 202 contributes to the Mg(2+) binding site. The active site involves arginine 243. An important for the catalytic mechanism of dephosphorylation region spans residues 264-269; it reads PVKTGR.

Belongs to the HPrK/P family. In terms of assembly, homohexamer. Mg(2+) is required as a cofactor.

The enzyme catalyses [HPr protein]-L-serine + ATP = [HPr protein]-O-phospho-L-serine + ADP + H(+). It carries out the reaction [HPr protein]-O-phospho-L-serine + phosphate + H(+) = [HPr protein]-L-serine + diphosphate. In terms of biological role, catalyzes the ATP- as well as the pyrophosphate-dependent phosphorylation of a specific serine residue in HPr, a phosphocarrier protein of the phosphoenolpyruvate-dependent sugar phosphotransferase system (PTS). HprK/P also catalyzes the pyrophosphate-producing, inorganic phosphate-dependent dephosphorylation (phosphorolysis) of seryl-phosphorylated HPr (P-Ser-HPr). The two antagonistic activities of HprK/P are regulated by several intracellular metabolites, which change their concentration in response to the absence or presence of rapidly metabolisable carbon sources (glucose, fructose, etc.) in the growth medium. Therefore, by controlling the phosphorylation state of HPr, HPrK/P is a sensor enzyme that plays a major role in the regulation of carbon metabolism and sugar transport: it mediates carbon catabolite repression (CCR), and regulates PTS-catalyzed carbohydrate uptake and inducer exclusion. The polypeptide is HPr kinase/phosphorylase (Streptococcus uberis (strain ATCC BAA-854 / 0140J)).